The primary structure comprises 382 residues: Hyaluronidase (382 aa).

A signal peptide (or 24) is located at residues 1–28; sequence MSRPLVITEGMMIGVLLMLAPINALLLG. The propeptide occupies 29–33; sequence FVQST. Cystine bridges form between cysteine 54–cysteine 345 and cysteine 221–cysteine 233. N-linked (GlcNAc...) asparagine glycosylation is present at asparagine 115. The Proton donor role is filled by glutamate 145. Asparagine 263 is a glycosylation site (N-linked (GlcNAc...) (complex) asparagine).

It belongs to the glycosyl hydrolase 56 family. As to quaternary structure, homotetramer. In terms of processing, N-glycosylated. Glycans found include a majority of small oligosaccharides (Man1-3GlcNAc2), most of which are either alpha 1,3-monofucosylated or alpha 1,3-(alpha 1,6-)difucosylated at the innermost GlcNAc residue, approximately 5% of high-mannose type structures, and 8% contains the terminal trisaccharide GalNAc beta 1-4[Fuc alpha 1-3]GlcNAc beta 1-in beta 1,2-linkage to the core alpha 1,3-mannosyl residue. In terms of tissue distribution, expressed in the venom glands of worker bees. It is also detected in the testes of drones but not in the queen-bee venom glands or in pupae.

It is found in the secreted. The enzyme catalyses Random hydrolysis of (1-&gt;4)-linkages between N-acetyl-beta-D-glucosamine and D-glucuronate residues in hyaluronate.. Its function is as follows. Hydrolyzes high molecular weight hyaluronic acid to produce small oligosaccharides. The chain is Hyaluronidase from Apis mellifera (Honeybee).